A 481-amino-acid polypeptide reads, in one-letter code: Aspartyl/glutamyl-tRNA(Asn/Gln) amidotransferase subunit B (481 aa).

It belongs to the GatB/GatE family. GatB subfamily. Heterotrimer of A, B and C subunits.

The catalysed reaction is L-glutamyl-tRNA(Gln) + L-glutamine + ATP + H2O = L-glutaminyl-tRNA(Gln) + L-glutamate + ADP + phosphate + H(+). It catalyses the reaction L-aspartyl-tRNA(Asn) + L-glutamine + ATP + H2O = L-asparaginyl-tRNA(Asn) + L-glutamate + ADP + phosphate + 2 H(+). Functionally, allows the formation of correctly charged Asn-tRNA(Asn) or Gln-tRNA(Gln) through the transamidation of misacylated Asp-tRNA(Asn) or Glu-tRNA(Gln) in organisms which lack either or both of asparaginyl-tRNA or glutaminyl-tRNA synthetases. The reaction takes place in the presence of glutamine and ATP through an activated phospho-Asp-tRNA(Asn) or phospho-Glu-tRNA(Gln). This Pseudomonas entomophila (strain L48) protein is Aspartyl/glutamyl-tRNA(Asn/Gln) amidotransferase subunit B.